The primary structure comprises 279 residues: NADPH-dependent 7-cyano-7-deazaguanine reductase (279 aa).

86-88 contacts substrate; the sequence is IES. Position 88 to 89 (88 to 89) interacts with NADPH; the sequence is SK. The active-site Thioimide intermediate is the Cys187. The active-site Proton donor is the Asp194. Residue 226–227 participates in substrate binding; sequence HE. Residue 255–256 participates in NADPH binding; it reads RG.

This sequence belongs to the GTP cyclohydrolase I family. QueF type 2 subfamily. In terms of assembly, homodimer.

The protein localises to the cytoplasm. It carries out the reaction 7-aminomethyl-7-carbaguanine + 2 NADP(+) = 7-cyano-7-deazaguanine + 2 NADPH + 3 H(+). Its pathway is tRNA modification; tRNA-queuosine biosynthesis. In terms of biological role, catalyzes the NADPH-dependent reduction of 7-cyano-7-deazaguanine (preQ0) to 7-aminomethyl-7-deazaguanine (preQ1). In Actinobacillus pleuropneumoniae serotype 3 (strain JL03), this protein is NADPH-dependent 7-cyano-7-deazaguanine reductase.